Here is a 296-residue protein sequence, read N- to C-terminus: 33 kDa chaperonin (296 aa).

Cystine bridges form between Cys238–Cys240 and Cys271–Cys274.

It belongs to the HSP33 family. In terms of processing, under oxidizing conditions two disulfide bonds are formed involving the reactive cysteines. Under reducing conditions zinc is bound to the reactive cysteines and the protein is inactive.

It is found in the cytoplasm. Its function is as follows. Redox regulated molecular chaperone. Protects both thermally unfolding and oxidatively damaged proteins from irreversible aggregation. Plays an important role in the bacterial defense system toward oxidative stress. The chain is 33 kDa chaperonin from Clostridium botulinum (strain ATCC 19397 / Type A).